Here is a 197-residue protein sequence, read N- to C-terminus: Pyridoxal 5'-phosphate synthase subunit PdxT (197 aa).

53–55 (GES) contributes to the L-glutamine binding site. C85 acts as the Nucleophile in catalysis. Residues R114 and 142–143 (IR) contribute to the L-glutamine site. Catalysis depends on charge relay system residues H179 and E181.

The protein belongs to the glutaminase PdxT/SNO family. In the presence of PdxS, forms a dodecamer of heterodimers. Only shows activity in the heterodimer.

It carries out the reaction aldehydo-D-ribose 5-phosphate + D-glyceraldehyde 3-phosphate + L-glutamine = pyridoxal 5'-phosphate + L-glutamate + phosphate + 3 H2O + H(+). It catalyses the reaction L-glutamine + H2O = L-glutamate + NH4(+). It functions in the pathway cofactor biosynthesis; pyridoxal 5'-phosphate biosynthesis. In terms of biological role, catalyzes the hydrolysis of glutamine to glutamate and ammonia as part of the biosynthesis of pyridoxal 5'-phosphate. The resulting ammonia molecule is channeled to the active site of PdxS. In Thermococcus gammatolerans (strain DSM 15229 / JCM 11827 / EJ3), this protein is Pyridoxal 5'-phosphate synthase subunit PdxT.